The primary structure comprises 301 residues: MRTFQEIILALQHYWTRQGCALLQPYDMEVGAGTSHTATFLRALGPEPWKAAYVQPTRRPKDGRYGENPNRLQHYYQFQAVLKPAPSDILELYLGSLEELGFDLRQNDIRFVEDDWENPTLGAWGLGWEVWLNGMEVTQFTYFQQVGGMNCKPITGEITYGLERLAMYLQGVDNVFDLTWTKGLSYRDVYHQNEVEQSFYNFGHSDLDFLFQAFASHEAQARHLVEQGLPLPAYEQVLKAAHTFNLLDARGAISVTERAAYIGRIRELARSVAHAYYESRKRLGFPLAPVEWTQELLEKAA.

This sequence belongs to the class-II aminoacyl-tRNA synthetase family. Tetramer of two alpha and two beta subunits.

It is found in the cytoplasm. It carries out the reaction tRNA(Gly) + glycine + ATP = glycyl-tRNA(Gly) + AMP + diphosphate. The sequence is that of Glycine--tRNA ligase alpha subunit from Nitrosospira multiformis (strain ATCC 25196 / NCIMB 11849 / C 71).